The chain runs to 55 residues: Hydrophobic protein LTI6B (55 aa).

A run of 2 helical transmembrane segments spans residues 8 to 28 (IDIL…FGCG) and 31 to 51 (FWIC…YAIY).

The protein belongs to the UPF0057 (PMP3) family.

Its subcellular location is the membrane. Functionally, plays a role in the regulation of membrane potential. Could mediate a proton leak. This chain is Hydrophobic protein LTI6B (LTI6B), found in Oryza sativa subsp. indica (Rice).